The chain runs to 101 residues: uncharacterized protein (101 aa).

This is an uncharacterized protein from Cupriavidus necator (strain ATCC 17699 / DSM 428 / KCTC 22496 / NCIMB 10442 / H16 / Stanier 337) (Ralstonia eutropha).